The chain runs to 1039 residues: Kinesin-like protein KIN-5B (1039 aa).

Residues 48-390 (NVQVILRCKP…LDYAYRAKNI (343 aa)) form the Kinesin motor domain. 134–141 (GQTGTGKT) is a binding site for ATP. Positions 1008-1039 (TLSEEHTSLEKISTKQGLGEANNRTPFLEVNK) are disordered. The span at 1010–1020 (SEEHTSLEKIS) shows a compositional bias: basic and acidic residues.

It belongs to the TRAFAC class myosin-kinesin ATPase superfamily. Kinesin family. KIN-5/BimC subfamily.

The protein resides in the cytoplasm. The protein localises to the cytoskeleton. It localises to the spindle. Responsible for microtubule translocation. May be important for the organization of phragmoplast-specific arrays of microtubules. Plays an essential role in stabilizing the mitotic spindle. Required during mitotic cytokinesis. This is Kinesin-like protein KIN-5B from Arabidopsis thaliana (Mouse-ear cress).